Reading from the N-terminus, the 150-residue chain is D-aminoacyl-tRNA deacylase (150 aa).

A Gly-cisPro motif, important for rejection of L-amino acids motif is present at residues 136–137 (GP).

The protein belongs to the DTD family. In terms of assembly, homodimer.

Its subcellular location is the cytoplasm. The enzyme catalyses glycyl-tRNA(Ala) + H2O = tRNA(Ala) + glycine + H(+). It catalyses the reaction a D-aminoacyl-tRNA + H2O = a tRNA + a D-alpha-amino acid + H(+). Functionally, an aminoacyl-tRNA editing enzyme that deacylates mischarged D-aminoacyl-tRNAs. Also deacylates mischarged glycyl-tRNA(Ala), protecting cells against glycine mischarging by AlaRS. Acts via tRNA-based rather than protein-based catalysis; rejects L-amino acids rather than detecting D-amino acids in the active site. By recycling D-aminoacyl-tRNA to D-amino acids and free tRNA molecules, this enzyme counteracts the toxicity associated with the formation of D-aminoacyl-tRNA entities in vivo and helps enforce protein L-homochirality. The protein is D-aminoacyl-tRNA deacylase of Staphylococcus aureus (strain bovine RF122 / ET3-1).